We begin with the raw amino-acid sequence, 125 residues long: Probable mercury resistance operon repressor (125 aa).

The region spanning 15-109 is the HTH arsR-type domain; sequence VPCTHPDTTA…LARCLAADNA (95 aa). A DNA-binding region (H-T-H motif) is located at residues 49–68; the sequence is SAECVEHAGISQPRVSVHLS. Residues C69, C73, and C114 each coordinate Hg(2+).

Negatively regulates the mercuric reductase merA and the organolyase merB in the absence of mercuric ions. This chain is Probable mercury resistance operon repressor (merR), found in Streptomyces lividans.